A 146-amino-acid chain; its full sequence is Hemoglobin subunit beta-A/B (146 aa).

Glycine 1 carries the N-acetylserine; in variant beta-B modification. The Globin domain maps to 2–146 (FLTAEEKGLV…VANALAHKYH (145 aa)). Position 44 is a phosphoserine (serine 44). At lysine 59 the chain carries N6-acetyllysine. Heme b is bound at residue histidine 63. The residue at position 82 (lysine 82) is an N6-acetyllysine. Histidine 92 lines the heme b pocket. An S-nitrosocysteine modification is found at cysteine 93. Lysine 144 is subject to N6-acetyllysine.

It belongs to the globin family. As to quaternary structure, heterotetramer of two alpha chains and two beta chains. In terms of tissue distribution, red blood cells.

In terms of biological role, involved in oxygen transport from the lung to the various peripheral tissues. The polypeptide is Hemoglobin subunit beta-A/B (HBB) (Felis catus (Cat)).